The following is a 1192-amino-acid chain: ATP-dependent helicase/deoxyribonuclease subunit B (1192 aa).

The protein belongs to the helicase family. AddB/RexB type 2 subfamily. Heterodimer of AddA and RexB. It depends on Mg(2+) as a cofactor.

Its function is as follows. The heterodimer acts as both an ATP-dependent DNA helicase and an ATP-dependent, dual-direction single-stranded exonuclease. Recognizes the chi site generating a DNA molecule suitable for the initiation of homologous recombination. This subunit has 5' -&gt; 3' nuclease activity but not helicase activity. In Pediococcus pentosaceus (strain ATCC 25745 / CCUG 21536 / LMG 10740 / 183-1w), this protein is ATP-dependent helicase/deoxyribonuclease subunit B.